Consider the following 431-residue polypeptide: Enolase (431 aa).

Gln-167 is a (2R)-2-phosphoglycerate binding site. Glu-209 functions as the Proton donor in the catalytic mechanism. Positions 246, 290, and 317 each coordinate Mg(2+). Positions 342, 371, 372, and 393 each coordinate (2R)-2-phosphoglycerate. Lys-342 functions as the Proton acceptor in the catalytic mechanism.

Belongs to the enolase family. Component of the RNA degradosome, a multiprotein complex involved in RNA processing and mRNA degradation. Mg(2+) serves as cofactor.

It is found in the cytoplasm. The protein localises to the secreted. It localises to the cell surface. It catalyses the reaction (2R)-2-phosphoglycerate = phosphoenolpyruvate + H2O. It functions in the pathway carbohydrate degradation; glycolysis; pyruvate from D-glyceraldehyde 3-phosphate: step 4/5. Catalyzes the reversible conversion of 2-phosphoglycerate (2-PG) into phosphoenolpyruvate (PEP). It is essential for the degradation of carbohydrates via glycolysis. The polypeptide is Enolase (Yersinia enterocolitica serotype O:8 / biotype 1B (strain NCTC 13174 / 8081)).